A 54-amino-acid chain; its full sequence is Ovomucoid (54 aa).

The region spanning Val-4 to Cys-54 is the Kazal-like domain. Disulfide bonds link Cys-6–Cys-36, Cys-14–Cys-33, and Cys-22–Cys-54. N-linked (GlcNAc...) asparagine glycosylation is present at Asn-43.

The protein resides in the secreted. The polypeptide is Ovomucoid (Guira guira (Guira cuckoo)).